A 204-amino-acid chain; its full sequence is CLAVATA3/ESR (CLE)-related protein 1 (204 aa).

Positions 1–21 (MAKNAMLCLLILSVVLALAFA) are cleaved as a signal peptide. The segment at 21–83 (ATNEKDDKEA…SNQLQNAYRM (63 aa)) is required for secretion from the host cytoplasm to the host apoplasm. Residue Asn32 is glycosylated (N-linked (GlcNAc...) asparagine). Residues 116–204 (RNTGMKPQSY…TPGVPDRQHR (89 aa)) are disordered. Composition is skewed to basic and acidic residues over residues 139–151 (LHNR…EQKR), 160–172 (LHNR…EQKR), and 181–193 (LHNR…EQKR). Propeptides (removed in mature form) lie at residues 142–150 (REKILEEQK), 163–171 (REKTLEEQK), and 184–192 (REKTLEEQK).

It belongs to the CLV3/ESR signal peptide family. Preprocessing of the precursor by host proteases leads first to the production of 21-mer CLE-containing peptides (Arg-130 to Lys-150, Arg-151 to Lys-171 and Arg-172 to Lys-192) followed by an ultimate C-term trimming to give the mature 12-mer CLE1-1 peptide. In terms of tissue distribution, highly expressed exclusively within the dorsal esophageal gland cell during syncytium formation in host plants.

Its subcellular location is the secreted. The protein localises to the host cytoplasm. It localises to the host extracellular space. The protein resides in the extracellular space. It is found in the apoplast. Functionally, mimics host plant CLE extracellular signal peptides that regulate cell fate. May play a role in the differentiation or division of feeding cells (syncytia) induced in plant roots during infection. This is CLAVATA3/ESR (CLE)-related protein 1 from Globodera rostochiensis (Golden nematode worm).